The primary structure comprises 89 residues: Putative membrane protein insertion efficiency factor (89 aa).

The disordered stretch occupies residues 68-89; it reads VPPPNSDARNAPHEAEASSHRL. A compositionally biased stretch (basic and acidic residues) spans 77 to 89; the sequence is NAPHEAEASSHRL.

The protein belongs to the UPF0161 family.

It localises to the cell inner membrane. Functionally, could be involved in insertion of integral membrane proteins into the membrane. The protein is Putative membrane protein insertion efficiency factor of Burkholderia thailandensis (strain ATCC 700388 / DSM 13276 / CCUG 48851 / CIP 106301 / E264).